We begin with the raw amino-acid sequence, 176 residues long: NAD(P)H-quinone oxidoreductase subunit 6, chloroplastic (176 aa).

The next 5 membrane-spanning stretches (helical) occupy residues 10–30, 32–52, 61–81, 92–112, and 152–172; these read FLLV…VLLP, PIFS…LYIL, AQLL…VMFM, LWTV…FSLI, and FFLP…GAIS.

The protein belongs to the complex I subunit 6 family. NDH is composed of at least 16 different subunits, 5 of which are encoded in the nucleus.

It localises to the plastid. The protein resides in the chloroplast thylakoid membrane. The enzyme catalyses a plastoquinone + NADH + (n+1) H(+)(in) = a plastoquinol + NAD(+) + n H(+)(out). The catalysed reaction is a plastoquinone + NADPH + (n+1) H(+)(in) = a plastoquinol + NADP(+) + n H(+)(out). Its function is as follows. NDH shuttles electrons from NAD(P)H:plastoquinone, via FMN and iron-sulfur (Fe-S) centers, to quinones in the photosynthetic chain and possibly in a chloroplast respiratory chain. The immediate electron acceptor for the enzyme in this species is believed to be plastoquinone. Couples the redox reaction to proton translocation, and thus conserves the redox energy in a proton gradient. The protein is NAD(P)H-quinone oxidoreductase subunit 6, chloroplastic (ndhG) of Lobularia maritima (Sweet alyssum).